The sequence spans 179 residues: Adenine phosphoribosyltransferase (179 aa).

This sequence belongs to the purine/pyrimidine phosphoribosyltransferase family. In terms of assembly, homodimer.

It localises to the cytoplasm. The enzyme catalyses AMP + diphosphate = 5-phospho-alpha-D-ribose 1-diphosphate + adenine. The protein operates within purine metabolism; AMP biosynthesis via salvage pathway; AMP from adenine: step 1/1. Catalyzes a salvage reaction resulting in the formation of AMP, that is energically less costly than de novo synthesis. In Methylacidiphilum infernorum (isolate V4) (Methylokorus infernorum (strain V4)), this protein is Adenine phosphoribosyltransferase.